The sequence spans 220 residues: MFLGTIYSFKTNTRTPCLLELAKRLDLQVDLVETYHHKFPTDLAAKFPLQKLPVFIGADGFELSEVIAIFKYFYEKGKHNDKEGLGPINEIEEAEMLKWMCFINFDIVTPQIVRPWVDMFRGSVPYEDKAFKESAARAIDSLKIINELVKDRTYLVGDRFTLADLFFGSMLRRFFHSIIDEKTRKELPHLTRYYVTMFHQAKLEAYYPLELPLTVTVPNN.

Positions Met1–Asp81 constitute a GST N-terminal domain. One can recognise a GST C-terminal domain in the interval Asn89–Thr216.

The protein belongs to the GST superfamily.

The protein localises to the cytoplasm. The enzyme catalyses RX + glutathione = an S-substituted glutathione + a halide anion + H(+). In terms of biological role, involved in the oxidative stress response and detoxification. The sequence is that of Putative glutathione S-transferase C460.02c from Schizosaccharomyces pombe (strain 972 / ATCC 24843) (Fission yeast).